A 310-amino-acid chain; its full sequence is MVKVYAPASSANMSVGFDVLGAAVTPVDGALLGDVVTVEAAETFSLNNLGRFADKLPSEPRENIVYQCWERFCQELGKQIPVAMTLEKNMPIGSGLGSSACSVVAALMAMNEHCGKPLNDTRLLALMGELEGRISGSIHYDNVAPCFLGGMQLMIEENDIISQQVPGFDEWLWVLAYPGIKVSTAEARAILPAQYRRQDCIAHGRHLAGFIHACYSRQPELAANLMKDVIAEPYRERLLPGFRQARQAVAEIGAVASGISGSGPTLFALCDKPDTAQRVADWLGKNYLQNQEGFVHICRLDTAGARVLEN.

91–101 (PIGSGLGSSAC) is an ATP binding site.

This sequence belongs to the GHMP kinase family. Homoserine kinase subfamily.

The protein resides in the cytoplasm. It catalyses the reaction L-homoserine + ATP = O-phospho-L-homoserine + ADP + H(+). The protein operates within amino-acid biosynthesis; L-threonine biosynthesis; L-threonine from L-aspartate: step 4/5. In terms of biological role, catalyzes the ATP-dependent phosphorylation of L-homoserine to L-homoserine phosphate. The protein is Homoserine kinase of Escherichia coli O6:H1 (strain CFT073 / ATCC 700928 / UPEC).